A 432-amino-acid chain; its full sequence is Homogentisate 1,2-dioxygenase (432 aa).

3 residues coordinate Fe cation: H333, E339, and H369.

This sequence belongs to the homogentisate dioxygenase family. Fe cation is required as a cofactor.

The catalysed reaction is homogentisate + O2 = 4-maleylacetoacetate + H(+). It functions in the pathway amino-acid degradation; L-phenylalanine degradation; acetoacetate and fumarate from L-phenylalanine: step 4/6. In Dictyostelium discoideum (Social amoeba), this protein is Homogentisate 1,2-dioxygenase (hgd).